We begin with the raw amino-acid sequence, 83 residues long: Hainantoxin-III 7 (83 aa).

Residues 1–21 (MKASMFLALAGLVLLFVVGYA) form the signal peptide. A propeptide spanning residues 22–48 (SESEEKEFPRELLSKVFAVDDFKGEER) is cleaved from the precursor. 3 disulfides stabilise this stretch: Cys-50-Cys-65, Cys-57-Cys-70, and Cys-64-Cys-77. Position 81 is a leucine amide (Leu-81).

This sequence belongs to the neurotoxin 10 (Hwtx-1) family. 15 (Hntx-3) subfamily. In terms of assembly, monomer. Expressed by the venom gland.

The protein localises to the secreted. In terms of biological role, selective antagonist of neuronal tetrodotoxin (TTX)-sensitive voltage-gated sodium channels (IC(50)=1270 nM on Nav1.1/SCN1A, 270 nM on Nav1.2/SCN2A, 491 nM on Nav1.3/SCN3A and 232 nM on Nav1.7/SCN9A). This toxin suppress Nav1.7 current amplitude without significantly altering the activation, inactivation, and repriming kinetics. Short extreme depolarizations partially activate the toxin-bound channel, indicating voltage-dependent inhibition of this toxin. This toxin increases the deactivation of the Nav1.7 current after extreme depolarizations. The toxin-Nav1.7 complex is gradually dissociated upon prolonged strong depolarizations in a voltage-dependent manner, and the unbound toxin rebinds to Nav1.7 after a long repolarization. Moreover, analysis of chimeric channels showed that the DIIS3-S4 linker is critical for toxin binding to Nav1.7. These data are consistent with this toxin interacting with Nav1.7 site 4 and trapping the domain II voltage sensor in the closed state. The polypeptide is Hainantoxin-III 7 (Cyriopagopus hainanus (Chinese bird spider)).